The primary structure comprises 360 residues: Decorin (360 aa).

Positions 1–16 are cleaved as a signal peptide; it reads MTATLILLLLAQVSWA. The propeptide occupies 17–30; the sequence is GPFQQRGLFDFMLE. O-linked (Xyl...) (glycosaminoglycan) serine glycosylation is present at Ser-34. 2 disulfides stabilise this stretch: Cys-55–Cys-61 and Cys-59–Cys-68. LRR repeat units lie at residues 74-94, 95-118, 119-142, 143-163, 164-187, 188-213, 214-234, 235-258, 259-282, 283-305, 306-335, and 336-360; these read DKVP…NNKI, TEIK…NNKI, SKIS…KNHL, KELP…ENEI, TKVR…TNPL, KSSG…DTNI, TTIP…GNKI, TKID…FNDI, SAVD…NNKL, IRVP…NNNI, SVVG…SNPV, and QYWE…GNYK. A glycan (N-linked (GlcNAc...) asparagine) is linked at Asn-212. N-linked (GlcNAc...) asparagine glycans are attached at residues Asn-263 and Asn-304. A disulfide bond links Cys-314 and Cys-347.

This sequence belongs to the small leucine-rich proteoglycan (SLRP) family. SLRP class I subfamily. Binds to type I and type II collagen, fibronectin and TGF-beta. Forms a ternary complex with MFAP2 and ELN. Interacts with DPT. Post-translationally, the attached glycosaminoglycan chain can be either chondroitin sulfate or dermatan sulfate depending upon the tissue of origin.

The protein resides in the secreted. Its subcellular location is the extracellular space. The protein localises to the extracellular matrix. May affect the rate of fibrils formation. The protein is Decorin (DCN) of Oryctolagus cuniculus (Rabbit).